A 238-amino-acid polypeptide reads, in one-letter code: Purine nucleoside phosphorylase DeoD-type (238 aa).

A purine D-ribonucleoside is bound at residue H4. Phosphate contacts are provided by residues G20, R24, R43, and 87-90 (RVGS). A purine D-ribonucleoside-binding positions include 179–181 (EME) and 203–204 (SD). D204 functions as the Proton donor in the catalytic mechanism.

This sequence belongs to the PNP/UDP phosphorylase family. Homohexamer; trimer of homodimers.

The enzyme catalyses a purine D-ribonucleoside + phosphate = a purine nucleobase + alpha-D-ribose 1-phosphate. It catalyses the reaction a purine 2'-deoxy-D-ribonucleoside + phosphate = a purine nucleobase + 2-deoxy-alpha-D-ribose 1-phosphate. Functionally, catalyzes the reversible phosphorolytic breakdown of the N-glycosidic bond in the beta-(deoxy)ribonucleoside molecules, with the formation of the corresponding free purine bases and pentose-1-phosphate. The polypeptide is Purine nucleoside phosphorylase DeoD-type (Actinobacillus succinogenes (strain ATCC 55618 / DSM 22257 / CCUG 43843 / 130Z)).